The primary structure comprises 506 residues: Histidine--tRNA ligase (506 aa).

The protein belongs to the class-II aminoacyl-tRNA synthetase family. As to quaternary structure, homodimer.

Its subcellular location is the cytoplasm. The catalysed reaction is tRNA(His) + L-histidine + ATP = L-histidyl-tRNA(His) + AMP + diphosphate + H(+). The protein is Histidine--tRNA ligase (hisS) of Bradyrhizobium diazoefficiens (strain JCM 10833 / BCRC 13528 / IAM 13628 / NBRC 14792 / USDA 110).